The sequence spans 287 residues: uncharacterized protein (287 aa).

A compositionally biased stretch (basic and acidic residues) spans 1-17; it reads MRWQGRRESDNVEDRRN. Residues 1–29 form a disordered region; it reads MRWQGRRESDNVEDRRNSSGGPSMGGPGF. A helical transmembrane segment spans residues 38 to 60; it reads LILLIVVLVAGYYGVDLTGLMTG.

Its subcellular location is the membrane. This is an uncharacterized protein from Escherichia coli O6:H1 (strain CFT073 / ATCC 700928 / UPEC).